The following is a 754-amino-acid chain: RNA-directed RNA polymerase catalytic subunit (754 aa).

2 short sequence motifs (nuclear localization signal) span residues 189–197 (MVRREKDKR) and 205–218 (KVPV…KHDE). The interval 251–258 (RPFSKIVE) is promoter-binding site. Residues 288–484 (VTSLNARMNS…GINMSLEKSY (197 aa)) enclose the RdRp catalytic domain.

The protein belongs to the influenza viruses polymerase PB1 family. Influenza RNA polymerase is composed of three subunits: PB1, PB2 and PA. Interacts (via N-terminus) with PA (via C-terminus). Interacts (via C-terminus) with PB2 (via N-terminus); this interaction is essential for transcription initiation. In terms of processing, phosphorylated by host PRKCA.

The protein resides in the host nucleus. It is found in the host cytoplasm. The enzyme catalyses RNA(n) + a ribonucleoside 5'-triphosphate = RNA(n+1) + diphosphate. Functionally, RNA-dependent RNA polymerase which is responsible for replication and transcription of virus RNA segments. The transcription of viral mRNAs occurs by a unique mechanism called cap-snatching. 5' methylated caps of cellular mRNAs are cleaved after 10-13 nucleotides by PA. In turn, these short capped RNAs are used as primers by PB1 for transcription of viral mRNAs. During virus replication, PB1 initiates RNA synthesis and copy vRNA into complementary RNA (cRNA) which in turn serves as a template for the production of more vRNAs. The protein is RNA-directed RNA polymerase catalytic subunit of Homo sapiens (Human).